The primary structure comprises 179 residues: Inner membrane-spanning protein YciB (179 aa).

Transmembrane regions (helical) follow at residues I22–V42, M50–N70, W76–M96, L121–L141, and F149–I169.

Belongs to the YciB family.

The protein localises to the cell inner membrane. In terms of biological role, plays a role in cell envelope biogenesis, maintenance of cell envelope integrity and membrane homeostasis. The protein is Inner membrane-spanning protein YciB of Salmonella arizonae (strain ATCC BAA-731 / CDC346-86 / RSK2980).